We begin with the raw amino-acid sequence, 256 residues long: H-2 class II histocompatibility antigen, A-B alpha chain (256 aa).

The first 23 residues, Met1–Gly23, serve as a signal peptide directing secretion. Positions Glu24–Asn111 are alpha-1. The Extracellular segment spans residues Glu24–Glu218. Residues Glu112–Trp205 are alpha-2. Residues Pro114–Glu206 enclose the Ig-like C1-type domain. The cysteines at positions 134 and 190 are disulfide-linked. Asn145 carries N-linked (GlcNAc...) asparagine glycosylation. Residues Glu206–Glu218 are connecting peptide. A helical transmembrane segment spans residues Thr219–Leu244. The Cytoplasmic segment spans residues Arg245–Leu256.

The protein belongs to the MHC class II family.

The protein localises to the membrane. The protein is H-2 class II histocompatibility antigen, A-B alpha chain (H2-Aa) of Mus musculus (Mouse).